Here is a 421-residue protein sequence, read N- to C-terminus: Phosphatidate cytidylyltransferase 1 (421 aa).

An N-acetylmethionine modification is found at M1. Residues 1-12 show a composition bias toward polar residues; that stretch reads MEEENVTSSPST. The disordered stretch occupies residues 1-26; sequence MEEENVTSSPSTPVHRLRHRRRSNEV. The next 8 membrane-spanning stretches (helical) occupy residues 60-80, 102-122, 149-169, 183-203, 206-226, 246-266, 321-341, and 369-389; these read IGGFVLVVYMGHLYITAMVVV, LPYIKQLNWHFFFTAMLFVYG, YHMAICYLLYIIGFMWFILTL, WTHMILIVVFTQSSFTVANIF, IFWFLLPASLIIINDIFAYIF, GFIGASVTTIISAFVLANILG, LCLGLFASIIAPFGGFFASGF, and VMAVFAYIYLQSFIVSQSVSV.

It belongs to the CDS family. Mg(2+) serves as cofactor.

It is found in the membrane. The catalysed reaction is a 1,2-diacyl-sn-glycero-3-phosphate + CTP + H(+) = a CDP-1,2-diacyl-sn-glycerol + diphosphate. It functions in the pathway phospholipid metabolism; CDP-diacylglycerol biosynthesis; CDP-diacylglycerol from sn-glycerol 3-phosphate: step 3/3. Its function is as follows. May be involved in the synthesis of minor phospholipids and in modulation of IP3-mediated signal transduction. This is Phosphatidate cytidylyltransferase 1 from Arabidopsis thaliana (Mouse-ear cress).